The chain runs to 385 residues: Dual-specificity RNA methyltransferase RlmN (385 aa).

Glu-113 functions as the Proton acceptor in the catalytic mechanism. Residues 120–352 form the Radical SAM core domain; the sequence is VGRAGALCVS…NRAGYASPIR (233 aa). An intrachain disulfide couples Cys-127 to Cys-363. 3 residues coordinate [4Fe-4S] cluster: Cys-134, Cys-138, and Cys-141. S-adenosyl-L-methionine-binding positions include 189–190, Ser-221, 243–245, and Asn-320; these read GE and SLH. Catalysis depends on Cys-363, which acts as the S-methylcysteine intermediate.

The protein belongs to the radical SAM superfamily. RlmN family. Requires [4Fe-4S] cluster as cofactor.

The protein resides in the cytoplasm. The catalysed reaction is adenosine(2503) in 23S rRNA + 2 reduced [2Fe-2S]-[ferredoxin] + 2 S-adenosyl-L-methionine = 2-methyladenosine(2503) in 23S rRNA + 5'-deoxyadenosine + L-methionine + 2 oxidized [2Fe-2S]-[ferredoxin] + S-adenosyl-L-homocysteine. The enzyme catalyses adenosine(37) in tRNA + 2 reduced [2Fe-2S]-[ferredoxin] + 2 S-adenosyl-L-methionine = 2-methyladenosine(37) in tRNA + 5'-deoxyadenosine + L-methionine + 2 oxidized [2Fe-2S]-[ferredoxin] + S-adenosyl-L-homocysteine. Its function is as follows. Specifically methylates position 2 of adenine 2503 in 23S rRNA and position 2 of adenine 37 in tRNAs. m2A2503 modification seems to play a crucial role in the proofreading step occurring at the peptidyl transferase center and thus would serve to optimize ribosomal fidelity. This Phenylobacterium zucineum (strain HLK1) protein is Dual-specificity RNA methyltransferase RlmN.